A 43-amino-acid polypeptide reads, in one-letter code: Gene 67 protein (43 aa).

The chain is Gene 67 protein (67) from Mycobacterium phage L5 (Mycobacteriophage L5).